A 519-amino-acid polypeptide reads, in one-letter code: SMR domain-containing protein At5g58720 (519 aa).

Over residues 1 to 15 the composition is skewed to basic residues; sequence MKQKNQHKKKKKRSC. 2 disordered regions span residues 1-47 and 92-128; these read MKQK…REIE and ESGD…CSED. The segment covering 28-47 has biased composition (basic and acidic residues); the sequence is GNKKDVEEERKDGEGKREIE. The span at 98 to 127 shows a compositional bias: low complexity; it reads STSSVASGSSGQETASTSEYGAGSSSSCSE. The Smr domain maps to 428-502; sequence IDLHGQHVKP…NRGTLLIKLD (75 aa).

As to quaternary structure, interacts with PRL1.

The polypeptide is SMR domain-containing protein At5g58720 (Arabidopsis thaliana (Mouse-ear cress)).